We begin with the raw amino-acid sequence, 79 residues long: uncharacterized protein (79 aa).

Residues 15–37 (KSIVSVLALTSLGCGVFVISATA) traverse the membrane as a helical segment.

It is found in the membrane. This is an uncharacterized protein from Dictyostelium discoideum (Social amoeba).